The following is a 235-amino-acid chain: Ubiquitin-like-conjugating enzyme ATG10 (235 aa).

The active-site Glycyl thioester intermediate is the Cys-196.

Belongs to the ATG10 family. Forms homooligomers. Interacts with ATG7 and ATG12.

The protein resides in the preautophagosomal structure membrane. E2-like enzyme required for the cytoplasm to vacuole transport (Cvt), autophagy and nucleophagy. Acts as an E2-like enzyme that catalyzes the conjugation of ATG12 to ATG5. ATG12 conjugation to ATG5 is required for proper localization of ATG8 to the preautophagosomal structure (PAS). Likely serves as an ATG5-recognition molecule. Autophagy is required for proper vegetative growth, asexual/sexual reproduction, and full virulence. Autophagy is particularly involved in the biosynthesis of deoxynivalenol (DON), an important virulence determinant. The chain is Ubiquitin-like-conjugating enzyme ATG10 from Gibberella zeae (strain ATCC MYA-4620 / CBS 123657 / FGSC 9075 / NRRL 31084 / PH-1) (Wheat head blight fungus).